The chain runs to 205 residues: Thymidylate kinase (205 aa).

11–18 (GLDKSGKT) lines the ATP pocket.

It belongs to the thymidylate kinase family. Homodimer; the dimer arrangement is orthogonal and not antiparallel as in human enzyme.

The enzyme catalyses dTMP + ATP = dTDP + ADP. It participates in pyrimidine metabolism; dTTP biosynthesis. Functionally, poxvirus TMP kinase is able to phosphorylate dTMP, dUMP and also dGMP from any purine and pyrimidine nucleoside triphosphate. The large substrate specificity is explained by the presence of a canal connecting the edge of the dimer interface to the TMP base binding pocket, canal not found in the human homolog. This is Thymidylate kinase (OPG178) from Homo sapiens (Human).